We begin with the raw amino-acid sequence, 154 residues long: MKAQKGFTLIELMIVVAIIGILAAIAIPQYQDYTARTQVTRAVSEVSALKTAAESAILEGKEIVSSATPKDTQYDIGFTESTLLDGSGKSQIQVTDNKDGTVELVATLGKSSGSAIKGAVITVSRKNDGVWNCKITKTPTAWKPNYAPANCPKS.

A propeptide spans 1–6 (leader sequence); sequence MKAQKG. At Phe-7 the chain carries N-methylphenylalanine. Residues 7–27 form a helical membrane-spanning segment; the sequence is FTLIELMIVVAIIGILAAIAI. An intrachain disulfide couples Cys-133 to Cys-151.

The protein belongs to the N-Me-Phe pilin family. In terms of assembly, the pili are polar flexible filaments of about 5.4 nanometers diameter and 2.5 micrometers average length; they consist of only a single polypeptide chain arranged in a helical configuration of five subunits per turn in the assembled pilus.

It localises to the fimbrium. Its subcellular location is the membrane. In Pseudomonas aeruginosa, this protein is Fimbrial protein (pilA).